The sequence spans 365 residues: MEKYEVNKTLELFETKIKDLENALDLDAINNRLKEIEPIMANPNFWNDSNQAKKISQELNQLTEKKQTITSIQNQYEDALMWLEEAKEGTESWDILEAEIDSLQKKISEFEIEVLLNGEYDHNNAILELHPGAGGTESMDWCGILMRMYERFAGYKGYKVEILNYLAGEEAGVKSVTLRISGPYAYGNLKSERGVHRLVRISPFDSNKRRHTSFVSCDVAPEIDETSEVELKDDDIRMDTFQSSGAGGQSVNTTYSAVRLTHIPTGIVVNIQNERSQIKNKEAAMQILKSKLIQKELEEKQAKLNALKGEKSDIGWGSQIRSYVFQPYQMVKDHRTNYEVGNIQSVMDGDIDGFINAYLKSKAYE.

Residue Gln249 is modified to N5-methylglutamine.

It belongs to the prokaryotic/mitochondrial release factor family. Methylated by PrmC. Methylation increases the termination efficiency of RF2.

Its subcellular location is the cytoplasm. Functionally, peptide chain release factor 2 directs the termination of translation in response to the peptide chain termination codons UGA and UAA. In Acholeplasma laidlawii (strain PG-8A), this protein is Peptide chain release factor 2.